Reading from the N-terminus, the 310-residue chain is Ribosomal RNA large subunit methyltransferase F (310 aa).

This sequence belongs to the methyltransferase superfamily. METTL16/RlmF family.

It is found in the cytoplasm. It catalyses the reaction adenosine(1618) in 23S rRNA + S-adenosyl-L-methionine = N(6)-methyladenosine(1618) in 23S rRNA + S-adenosyl-L-homocysteine + H(+). Specifically methylates the adenine in position 1618 of 23S rRNA. The polypeptide is Ribosomal RNA large subunit methyltransferase F (Psychromonas ingrahamii (strain DSM 17664 / CCUG 51855 / 37)).